The primary structure comprises 295 residues: NADPH-dependent reductive aminase (295 aa).

The N-terminal stretch at 1–18 is a signal peptide; that stretch reads MSKHIGIFGLGAMGTALA. 6 to 20 serves as a coordination point for NADP(+); sequence GIFGLGAMGTALAAK.

This sequence belongs to the HIBADH-related family. As to quaternary structure, homodimer. NADPH is required as a cofactor.

Its function is as follows. NADPH-dependent reductive aminase that catalyzes the reductive coupling of a broad set of carbonyl compounds with a variety of primary and secondary amines. Possesses remarkably high activity for the reductive amination of ketones and amines, often with high stereoselectivity and in some cases with ketone:amine ratios as low as 1:1. The cofactor NADPH, the carbonyl compound and the amine are added to the enzyme in that sequence, followed by the release of product, NADP(+) being released at last. RedAm is also able to act in the reverse, oxidative direction and exhibits activity in the dehydrogenation of amines to yield imines. The highest activity is found for 1-methyl-tetrahydroquinoline and acyclic amines are also found to be transformed. This is NADPH-dependent reductive aminase from Aspergillus oryzae (strain ATCC 42149 / RIB 40) (Yellow koji mold).